The chain runs to 661 residues: Pentatricopeptide repeat-containing protein At3g04750, mitochondrial (661 aa).

Residues 1 to 18 (MCFVLLLRRGFRLFGTEC) constitute a mitochondrion transit peptide. PPR repeat units lie at residues 99–131 (NVFV…RVSP), 132–163 (DRQT…GCLS), 165–195 (GNYL…MPHP), 196–230 (DVSS…GIEP), 231–265 (DEYT…GPVY), 268–298 (NLIL…MKKK), 299–333 (DMRS…DLVS), 334–366 (WNSL…KVKP), 367–401 (DRVT…QLKG), 402–432 (DAFL…ATEK), 433–467 (DVAL…GVTP), 468–498 (NNVT…MKDK), and 504–539 (ETEH…PSQS). Residues 540-615 (MWGSILSACR…TAGYSSVVGV (76 aa)) are type E motif. The type E(+) motif stretch occupies residues 616 to 647 (EGLHRFVAAEKQNHPRWTEIKRILQHLYNEMK).

This sequence belongs to the PPR family. PCMP-E subfamily.

The protein resides in the mitochondrion. This Arabidopsis thaliana (Mouse-ear cress) protein is Pentatricopeptide repeat-containing protein At3g04750, mitochondrial (PCMP-E81).